A 346-amino-acid chain; its full sequence is N-acetyl-gamma-glutamyl-phosphate reductase (346 aa).

The active site involves C149.

The protein belongs to the NAGSA dehydrogenase family. Type 1 subfamily.

The protein resides in the cytoplasm. It catalyses the reaction N-acetyl-L-glutamate 5-semialdehyde + phosphate + NADP(+) = N-acetyl-L-glutamyl 5-phosphate + NADPH + H(+). It functions in the pathway amino-acid biosynthesis; L-arginine biosynthesis; N(2)-acetyl-L-ornithine from L-glutamate: step 3/4. Its function is as follows. Catalyzes the NADPH-dependent reduction of N-acetyl-5-glutamyl phosphate to yield N-acetyl-L-glutamate 5-semialdehyde. The sequence is that of N-acetyl-gamma-glutamyl-phosphate reductase from Micrococcus luteus (strain ATCC 4698 / DSM 20030 / JCM 1464 / CCM 169 / CCUG 5858 / IAM 1056 / NBRC 3333 / NCIMB 9278 / NCTC 2665 / VKM Ac-2230) (Micrococcus lysodeikticus).